The sequence spans 127 residues: uncharacterized protein (127 aa).

Transmembrane regions (helical) follow at residues 64-84 (GYYI…FGYL) and 101-118 (FFHF…AIYY).

The protein resides in the membrane. This is an uncharacterized protein from Saccharomyces cerevisiae (strain ATCC 204508 / S288c) (Baker's yeast).